Reading from the N-terminus, the 1857-residue chain is MENGAEASDCDSDETVIEGSVTENEPEDEELPWRRLLLNQDTTCRSEFCFHSGVDGMQKGIHSPEIQLGLKLRKDSQEQNNKNKLLLALSEDLVLQDPQDKTAQNQVLLQTTKEFPVFTVSFPHPEVSWSHQNTGGHEAENCENLPHSKKELRENSDSPEVSLLSGTSPVAPDLVALKERLTEPVKTLAVPNTLSEPGEEVTQTMTSKETKDEESSLETFVSTLEKLLESSECTQEERLLEVMDDFNPQELFSTLSNSLGSVSVPLNAWAAQGRDELENKADAALPAKLLAAVNTGADVGPSCQGQEKSSSVSGGNGCLAVQPIMSQVDEDCTQIAQNIEDPKPFRLQTLTHENAISYEQINKKKNSDPIKNTSTQETPRVLRRSSRLEKLKASRDVVHTEAVLKKPERILSNTLSFKDQINSIFTTDSFSKRKNMHSSGFKNEQIRKSEQLRKKNGTGEMKKMCLCTINRRNVFGENLLYKAALHNDVDLVRCCIKNGENVNQPSYDGWTALHEASIGGYYQAVSELLKGGADVNVKGKYQITPLHDAVMNRHYKVAELLLMSGADPLFRSDHGTCALDEAKDSSMETLLMKYIPQQKKCHLSAQRNSTDPAHVEDMFQNKKPKLSSNNYTEFICDENFDRQEPGHLEINKGSNNLLMSKEYVCEHCQKDSNTTKFGKSNLNSVKNSRTNVSKRKGQKNRQQKKTQVDDRDCNLSQKIGTSSFRRTNKLLTQQQHAVQTLSDLPEESFELSTTTLSSLENGIGYNEACLVSKKSDTHVLDSSDGQELESVDQTEAASVSELSSYKEIKLLPVTTHQQPHTNQEQYSSPYKSLGNNSSNEKGKATNKWEDSFFSFIKGRSADSDSDCHTLDKSIASPKEGMSHDHHEEIMTGQEVDSQQRLSSENYFSQENDLKVHPLTTHPQEEAVNFCDSNLISVQHTPDYKNCLHEISFGNSYAKTEQSSTSCTRPPSTQKVSPLTVEVELLKGLQDSLAHRDSSPLVNQAGIHSLERKQDTDKNYTKKGPNTSSSSRPLPTVVHSQVIEITKAEKRREDLPGNEPINNTDFYSTDINKELANSSQLNQRKEKENVRKSDAELTHNDSEAERTLKSCEEKKKNMDSETHSPCDIQEHRKDQNFRKRKCSLKAPCSQGVNTTGIGKRNKKGESQLHVAARGGNLSRVKVLIEARADVNLRDNAGWTPLHKAASGGFDDVIIELLQAGANVNCENIDGIVPLHGASAGNHLKAAEILLEHGANPNQKDQKQRTALDEADDEKMKELLKSYGAIESTNGEKRNSTDLVKIPTVQPKRYKQFICDNDKAIGSPVPSHKAKKSESLPVHQTISAILQDIEEKQENLLKLEIRNSEDEEQYIGKMLEIKEVMDNILAQQKTERDDLAKKYRVSMESFKHGALREQLANLATRQKSLLVVAKKQKKIRLKIQNYKNATAVSGVGLRKLPCNSDISSDKKSQEPPTMGDSAHAQPGLLAPVSLAYGSMQEIPLSPEIESESQKINICLNAEAIRREEFSGNDINSKQNVQDCTLGGLLRSKPTDDAEKIASSSQPAALTPHAENSQAEATVKGCGFDSSALTGTINISEDKSIFSPNGACLAADPHSQKLSRCNPKRRNKKTASQQPSAGAAEPLPQAPAVLDTYTVHQTLPCLRDSAAAASHTDSTQSSLSSASAHQHPTKTVPHRNTTPRKKAVQLKDLILRGRINPGNNILEFKTQETTHRASVLPSGKLKGENGQIYQNPVTWLKELLGGGSYVTWNYAWNTVTYLGRELVKCVSEEAPMSAELNPPQLHQPHLSAGTSRESMQTIPHYLQIKEILQISKQELLPCHVMEQHWKFYVGRSHSEALLSW.

Disordered regions lie at residues Met1–Glu30 and Ser195–Ser215. Polar residues predominate over residues Ser195–Ser207. ANK repeat units follow at residues Phe475–Gln504, Asp508–Val537, and Tyr541–Phe570. The segment covering Lys676–Asn691 has biased composition (polar residues). Disordered stretches follow at residues Lys676–Arg711, Val813–Ala844, Arg995–His1038, Lys1046–Phe1065, and Ala1075–Arg1137. Residues Val692 to Lys704 show a composition bias toward basic residues. A compositionally biased stretch (polar residues) spans Thr814–Asn839. A compositionally biased stretch (basic and acidic residues) spans Ser1008–Tyr1019. Residues Gly1023–Pro1032 show a composition bias toward polar residues. Basic and acidic residues predominate over residues Gln1082 to Phe1136. ANK repeat units lie at residues Lys1162 to Leu1191, Ala1195 to Cys1224, and Asp1228 to Gln1257. Disordered regions lie at residues Asn1457–Gln1479, Gly1540–Ser1570, Asp1609–Leu1640, and Ala1663–Arg1697. The span at Ala1555–Ser1570 shows a compositional bias: polar residues. The segment covering Ala1663–Gln1683 has biased composition (low complexity). Positions Lys1687–Cys1782 constitute an RAMA domain.

In terms of assembly, interacts with REC114; the interaction is direct. Interacts with IHO1. As to expression, present in meiotic cells (at protein level).

The protein localises to the nucleus. The protein resides in the chromosome. In terms of biological role, required for DNA double-strand breaks (DSBs) formation during meiotic recombination. Regulates the spatial and temporal patterns of pre-DSB recombinosome assembly and recombination activity by acting as a scaffold that anchors REC114 and other factors to specific genomic locations, thereby regulating DSB formation. Plays a key role in recombination in the pseudoautosomal regions of sex chromosomes. The polypeptide is Ankyrin repeat domain-containing protein 31 (Mus musculus (Mouse)).